We begin with the raw amino-acid sequence, 319 residues long: Olfactory receptor 2S2 (319 aa).

Over 1–26 the chain is Extracellular; it reads MEKANETSPVMGFVLLRLSAHPELEK. Asn-5 carries N-linked (GlcNAc...) asparagine glycosylation. The chain crosses the membrane as a helical span at residues 27-50; sequence TFFVLILLMYLVILLGNGVLILVT. At 51 to 58 the chain is on the cytoplasmic side; that stretch reads ILDSRLHT. Residues 59–80 traverse the membrane as a helical segment; sequence PMYFFLGNLSFLDICFTTSSVP. Over 81–101 the chain is Extracellular; that stretch reads LVLDSFLTPQETISFSACAVQ. Cys-98 and Cys-190 are joined by a disulfide. A helical transmembrane segment spans residues 102-121; that stretch reads MALSFAMAGTECLLLSMMAF. Over 122–140 the chain is Cytoplasmic; the sequence is DRYVAICNPLRYSVIMSKA. A helical transmembrane segment spans residues 141–159; that stretch reads AYMPMAASSWAIGGAASVV. The Extracellular segment spans residues 160–196; that stretch reads HTSLAIQLPFCGDNVINHFTCEILAVLKLACADISIN. Residues 197–220 form a helical membrane-spanning segment; it reads VISMEVTNVIFLGVPVLFISFSYV. Residues 221-237 lie on the Cytoplasmic side of the membrane; that stretch reads FIITTILRIPSAEGRKK. A helical transmembrane segment spans residues 238 to 260; the sequence is VFSTCSAHLTVVIVFYGTLFFMY. Over 261 to 279 the chain is Extracellular; the sequence is GKPKSKDSMGADKEDLSDK. Residues 280 to 299 traverse the membrane as a helical segment; sequence LIPLFYGVVTPMLNPIIYSL. The Cytoplasmic segment spans residues 300–319; it reads RNKDVKAAVRRLLRPKGFTQ.

Belongs to the G-protein coupled receptor 1 family.

It localises to the cell membrane. Functionally, odorant receptor. The protein is Olfactory receptor 2S2 (OR2S2) of Homo sapiens (Human).